The primary structure comprises 382 residues: Lipoyl synthase, mitochondrial (382 aa).

The transit peptide at 1–30 (MHGRRHLAASLARALTYAPSRSISSTPSLL) directs the protein to the mitochondrion. Residues 25–34 (STPSLLQTLD) are compositionally biased toward polar residues. A disordered region spans residues 25 to 47 (STPSLLQTLDPSTPSPAAAPPTA). [4Fe-4S] cluster-binding residues include C112, C117, C123, C143, C147, C150, and S359. The region spanning 128-348 (ETGTATATIM…RSLGVDMGFR (221 aa)) is the Radical SAM core domain.

It belongs to the radical SAM superfamily. Lipoyl synthase family. It depends on [4Fe-4S] cluster as a cofactor.

It is found in the mitochondrion. It catalyses the reaction [[Fe-S] cluster scaffold protein carrying a second [4Fe-4S](2+) cluster] + N(6)-octanoyl-L-lysyl-[protein] + 2 oxidized [2Fe-2S]-[ferredoxin] + 2 S-adenosyl-L-methionine + 4 H(+) = [[Fe-S] cluster scaffold protein] + N(6)-[(R)-dihydrolipoyl]-L-lysyl-[protein] + 4 Fe(3+) + 2 hydrogen sulfide + 2 5'-deoxyadenosine + 2 L-methionine + 2 reduced [2Fe-2S]-[ferredoxin]. The protein operates within protein modification; protein lipoylation via endogenous pathway; protein N(6)-(lipoyl)lysine from octanoyl-[acyl-carrier-protein]: step 2/2. Its function is as follows. Catalyzes the radical-mediated insertion of two sulfur atoms into the C-6 and C-8 positions of the octanoyl moiety bound to the lipoyl domains of lipoate-dependent enzymes, thereby converting the octanoylated domains into lipoylated derivatives. This chain is Lipoyl synthase, mitochondrial, found in Oryza sativa subsp. indica (Rice).